Consider the following 37-residue polypeptide: MKVRPSVKPICEKCKVIRRKGNVMVICENPKHKQKQG.

This sequence belongs to the bacterial ribosomal protein bL36 family.

The protein is Large ribosomal subunit protein bL36 of Brevibacillus brevis (strain 47 / JCM 6285 / NBRC 100599).